A 304-amino-acid chain; its full sequence is Solute carrier family 25 member 34 (304 aa).

Solcar repeat units lie at residues 4–97 (VPPA…ACQA), 101–194 (QQPG…AKAW), and 204–295 (DSWL…LRKL). A run of 6 helical transmembrane segments spans residues 7 to 27 (AVDLVLGASACCLACVFTNPL), 45 to 65 (TYPRLYRGFVASVVAVVRADG), 98 to 120 (GLSQQPGGTVVAGAVAGALGAFV), 170 to 191 (VGGAVPRVMVGSAAQLATFASA), 206 to 226 (WLVALAGGMISSIAVVAVMTP), and 278 to 301 (LGPHTILSMLFWDELRKLAGWGQH).

Belongs to the mitochondrial carrier (TC 2.A.29) family.

The protein resides in the mitochondrion inner membrane. The catalysed reaction is a dicarboxylate(in) + sulfate(out) = a dicarboxylate(out) + sulfate(in). Functionally, putative antiporter that exchanges dicarboxylates and sulfur oxoanions across the inner membrane of mitochondria. This chain is Solute carrier family 25 member 34 (SLC25A34), found in Bos taurus (Bovine).